Here is a 175-residue protein sequence, read N- to C-terminus: Adenine phosphoribosyltransferase (175 aa).

Belongs to the purine/pyrimidine phosphoribosyltransferase family. As to quaternary structure, homodimer.

It localises to the cytoplasm. It catalyses the reaction AMP + diphosphate = 5-phospho-alpha-D-ribose 1-diphosphate + adenine. It participates in purine metabolism; AMP biosynthesis via salvage pathway; AMP from adenine: step 1/1. Its function is as follows. Catalyzes a salvage reaction resulting in the formation of AMP, that is energically less costly than de novo synthesis. The polypeptide is Adenine phosphoribosyltransferase (Thermosipho melanesiensis (strain DSM 12029 / CIP 104789 / BI429)).